Reading from the N-terminus, the 520-residue chain is Maturase K (520 aa).

This sequence belongs to the intron maturase 2 family. MatK subfamily.

The protein resides in the plastid. It localises to the chloroplast. Functionally, usually encoded in the trnK tRNA gene intron. Probably assists in splicing its own and other chloroplast group II introns. This Galanthus elwesii (Giant snowdrop) protein is Maturase K.